Consider the following 129-residue polypeptide: Glycine cleavage system H protein (129 aa).

One can recognise a Lipoyl-binding domain in the interval 23 to 104 (SVTVGITQHA…CYAAWLFKLK (82 aa)). Lys-64 carries the N6-lipoyllysine modification.

This sequence belongs to the GcvH family. As to quaternary structure, the glycine cleavage system is composed of four proteins: P, T, L and H. It depends on (R)-lipoate as a cofactor.

Its function is as follows. The glycine cleavage system catalyzes the degradation of glycine. The H protein shuttles the methylamine group of glycine from the P protein to the T protein. The chain is Glycine cleavage system H protein from Nitrosomonas europaea (strain ATCC 19718 / CIP 103999 / KCTC 2705 / NBRC 14298).